A 202-amino-acid chain; its full sequence is Dephospho-CoA kinase (202 aa).

One can recognise a DPCK domain in the interval 4–202 (VIGLTGGIAT…TDKGFINKER (199 aa)). 12-17 (ATGKST) contacts ATP.

The protein belongs to the CoaE family.

The protein resides in the cytoplasm. It carries out the reaction 3'-dephospho-CoA + ATP = ADP + CoA + H(+). The protein operates within cofactor biosynthesis; coenzyme A biosynthesis; CoA from (R)-pantothenate: step 5/5. In terms of biological role, catalyzes the phosphorylation of the 3'-hydroxyl group of dephosphocoenzyme A to form coenzyme A. This Staphylococcus haemolyticus (strain JCSC1435) protein is Dephospho-CoA kinase.